A 209-amino-acid polypeptide reads, in one-letter code: Holliday junction branch migration complex subunit RuvA (209 aa).

The segment at 1–70 (MFSYLKGEAI…EDGTYLYGFA (70 aa)) is domain I. The domain II stretch occupies residues 71 to 149 (SAAARDLFRQ…QWRDQFSLPD (79 aa)). Residues 149–153 (DTAAQ) are flexible linker. The domain III stretch occupies residues 154–209 (PNAAVHEDLELTLLALGYQETEIRGAIATLSQDSILLQNDNADEWIRRAITLLSQT).

This sequence belongs to the RuvA family. As to quaternary structure, homotetramer. Forms an RuvA(8)-RuvB(12)-Holliday junction (HJ) complex. HJ DNA is sandwiched between 2 RuvA tetramers; dsDNA enters through RuvA and exits via RuvB. An RuvB hexamer assembles on each DNA strand where it exits the tetramer. Each RuvB hexamer is contacted by two RuvA subunits (via domain III) on 2 adjacent RuvB subunits; this complex drives branch migration. In the full resolvosome a probable DNA-RuvA(4)-RuvB(12)-RuvC(2) complex forms which resolves the HJ.

The protein resides in the cytoplasm. Its function is as follows. The RuvA-RuvB-RuvC complex processes Holliday junction (HJ) DNA during genetic recombination and DNA repair, while the RuvA-RuvB complex plays an important role in the rescue of blocked DNA replication forks via replication fork reversal (RFR). RuvA specifically binds to HJ cruciform DNA, conferring on it an open structure. The RuvB hexamer acts as an ATP-dependent pump, pulling dsDNA into and through the RuvAB complex. HJ branch migration allows RuvC to scan DNA until it finds its consensus sequence, where it cleaves and resolves the cruciform DNA. The sequence is that of Holliday junction branch migration complex subunit RuvA from Picosynechococcus sp. (strain ATCC 27264 / PCC 7002 / PR-6) (Agmenellum quadruplicatum).